The sequence spans 1233 residues: Structural maintenance of chromosomes protein 1A (1233 aa).

32-39 contributes to the ATP binding site; the sequence is GPNGSGKS. Coiled coils occupy residues 104 to 124 and 163 to 503; these read EYKINNKVVQLHEYSEELEKL and ELAQ…KAEI. A compositionally biased stretch (basic and acidic residues) spans 284–293; that stretch reads IKEKDSELNQ. 2 disordered regions span residues 284-308 and 348-369; these read IKEKDSELNQKRPQYIKAKENTSHK and QEFEERMEEESQSQGRDLTLEE. A phosphoserine mark is found at S358 and S360. The 115-residue stretch at 515–629 folds into the SMC hinge domain; that stretch reads VYGRLIDLCQ…DNVEDARRIA (115 aa). N6-acetyllysine occurs at positions 648 and 713. The stretch at 660 to 935 forms a coiled coil; it reads KAKARRWDEK…RHNLLQACKM (276 aa). Residues 947–966 form a disordered region; that stretch reads MDDISQEEGSSQGEDSVSGS. Residues 953 to 966 show a composition bias toward low complexity; sequence EEGSSQGEDSVSGS. The residue at position 957 (S957) is a Phosphoserine; by ATM. S962 is modified (phosphoserine). S966 is subject to Phosphoserine; by ATM and ATR. S970 bears the Phosphoserine mark. A coiled-coil region spans residues 991–1068; it reads KDAQAEEEIK…FEQIKKERFD (78 aa). Position 1037 is an N6-acetyllysine (K1037).

Belongs to the SMC family. SMC1 subfamily. As to quaternary structure, forms a heterodimer with SMC3 in cohesin complexes. Cohesin complexes are composed of the SMC1 (SMC1A or SMC1B) and SMC3 heterodimer attached via their SMC hinge domain, RAD21 which link them, and one STAG protein (STAG1, STAG2 or STAG3), which interacts with RAD21. In germ cell cohesin complexes, SMC1A is mutually exclusive with SMC1B. Interacts with BRCA1. Found in a complex with CDCA5, SMC3 and RAD21, PDS5A/SCC-112 and PDS5B/APRIN. Interacts with NDC80. Interacts with BRAT1. Found in a complex containing POLE and SMC3. Interacts with RPGR, STAG3 and SYCP2. The cohesin complex interacts with the cohesin loading complex subunits NIPBL/Scc2 (via HEAT repeats) and MAU2/Scc4. NIPBL directly contacts all members of the complex, RAD21, SMC1A/B, SMC3 and STAG1. In terms of processing, ubiquitinated by the DCX(DCAF15) complex, leading to its degradation. Post-translationally, phosphorylated by ATM upon ionizing radiation in a NBS1-dependent manner. Phosphorylated by ATR upon DNA methylation in a MSH2/MSH6-dependent manner. Phosphorylation of Ser-957 and Ser-966 activates it and is required for S-phase checkpoint activation.

It localises to the nucleus. Its subcellular location is the chromosome. The protein localises to the centromere. The protein resides in the kinetochore. In terms of biological role, involved in chromosome cohesion during cell cycle and in DNA repair. Central component of cohesin complex. The cohesin complex is required for the cohesion of sister chromatids after DNA replication. The cohesin complex apparently forms a large proteinaceous ring within which sister chromatids can be trapped. At anaphase, the complex is cleaved and dissociates from chromatin, allowing sister chromatids to segregate. The cohesin complex may also play a role in spindle pole assembly during mitosis. Involved in DNA repair via its interaction with BRCA1 and its related phosphorylation by ATM, or via its phosphorylation by ATR. Works as a downstream effector both in the ATM/NBS1 branch and in the ATR/MSH2 branch of S-phase checkpoint. This chain is Structural maintenance of chromosomes protein 1A (SMC1A), found in Homo sapiens (Human).